The sequence spans 749 residues: Cytosolic phospholipase A2 (749 aa).

Residues 1-124 (MASIDPYQHI…GEKKQVPFTF (124 aa)) form the C2 domain. The tract at residues 1–178 (MASIDPYQHI…LRKLLGPEKT (178 aa)) is phospholipid binding. Residues Asp-40, Thr-41, Asp-43, Asn-65, Asp-93, Ala-94, and Asn-95 each contribute to the Ca(2+) site. The 603-residue stretch at 138–740 (VCSSTDLRFS…NDVESRKLHH (603 aa)) folds into the PLA2c domain. Catalysis depends on Ser-229, which acts as the Nucleophile. Residues 428–452 (HILGNDSSDSDDEMQEPKGTENAKA) are disordered. Over residues 442 to 452 (QEPKGTENAKA) the composition is skewed to basic and acidic residues. Asp-549 functions as the Proton acceptor in the catalytic mechanism. The interval 729–749 (SLNDVESRKLHHKDSQSKFQM) is disordered. Residues 733–749 (VESRKLHHKDSQSKFQM) show a composition bias toward basic and acidic residues.

It is found in the cytoplasm. The protein resides in the cytoplasmic vesicle. It carries out the reaction a 1,2-diacyl-sn-glycero-3-phosphocholine + H2O = a 1-acyl-sn-glycero-3-phosphocholine + a fatty acid + H(+). The enzyme catalyses a 1-acyl-sn-glycero-3-phosphocholine + H2O = sn-glycerol 3-phosphocholine + a fatty acid + H(+). With respect to regulation, stimulated by agonists such as ATP, EGF, thrombin and bradykinin as well as by cytosolic Ca(2+). In terms of biological role, selectively hydrolyzes arachidonyl phospholipids in the sn-2 position releasing arachidonic acid. Together with its lysophospholipid activity, it is implicated in the initiation of the inflammatory response. The protein is Cytosolic phospholipase A2 (pla2g4a) of Xenopus laevis (African clawed frog).